The primary structure comprises 43 residues: Protein PsbN (43 aa).

The helical transmembrane segment at 5–27 (ALVAISISRLLVSFTGYALYTAF) threads the bilayer.

This sequence belongs to the PsbN family.

The protein resides in the plastid. It localises to the chloroplast thylakoid membrane. May play a role in photosystem I and II biogenesis. This chain is Protein PsbN, found in Bowenia serrulata (Byfield fern).